A 284-amino-acid chain; its full sequence is Bifunctional protein FolD (284 aa).

NADP(+) contacts are provided by residues 166–168 (GAS) and I232.

This sequence belongs to the tetrahydrofolate dehydrogenase/cyclohydrolase family. As to quaternary structure, homodimer.

The enzyme catalyses (6R)-5,10-methylene-5,6,7,8-tetrahydrofolate + NADP(+) = (6R)-5,10-methenyltetrahydrofolate + NADPH. The catalysed reaction is (6R)-5,10-methenyltetrahydrofolate + H2O = (6R)-10-formyltetrahydrofolate + H(+). Its pathway is one-carbon metabolism; tetrahydrofolate interconversion. Functionally, catalyzes the oxidation of 5,10-methylenetetrahydrofolate to 5,10-methenyltetrahydrofolate and then the hydrolysis of 5,10-methenyltetrahydrofolate to 10-formyltetrahydrofolate. The polypeptide is Bifunctional protein FolD (Pseudomonas putida (strain W619)).